A 329-amino-acid polypeptide reads, in one-letter code: Olfactory receptor 52L1 (329 aa).

Over 1-43 the chain is Extracellular; that stretch reads MTLVSFFSFLSKPLIMLLSNSSWRLSQPSFLLVGIPGLEESQH. N20 is a glycosylation site (N-linked (GlcNAc...) asparagine). Residues 44-64 form a helical membrane-spanning segment; it reads WIALPLGILYLLALVGNVTIL. Residues 65–72 are Cytoplasmic-facing; that stretch reads FIIWMDPS. A helical transmembrane segment spans residues 73–93; the sequence is LHQSMYLFLSMLAAIDLVLAS. At 94 to 117 the chain is on the extracellular side; sequence STAPKALAVLLVHAHEIGYIVCLI. A disulfide bridge connects residues C115 and C207. A helical membrane pass occupies residues 118-138; it reads QMFFIHAFSSMESGVLVAMAL. At 139–157 the chain is on the cytoplasmic side; the sequence is DRYVAICHPLHHSTILHPG. The helical transmembrane segment at 158-178 threads the bilayer; sequence VIGRIGMVVLVRGLLLLIPFP. The Extracellular segment spans residues 179–214; it reads ILLGTLIFCQATIIGHAYCEHMAVVKLACSETTVNR. The chain crosses the membrane as a helical span at residues 215–235; that stretch reads AYGLTMALLVIGLDVLAIGVS. At 236-255 the chain is on the cytoplasmic side; that stretch reads YAHILQAVLKVPGSEARLKA. A helical membrane pass occupies residues 256–276; sequence FSTCGSHICVILVFYVPGIFS. Topologically, residues 277-291 are extracellular; it reads FLTHRFGHHVPHHVH. The helical transmembrane segment at 292–312 threads the bilayer; that stretch reads VLLATRYLLMPPALNPLVYGV. Over 313 to 329 the chain is Cytoplasmic; sequence KTQQIRQRVLRVFTQKD.

Belongs to the G-protein coupled receptor 1 family.

It is found in the cell membrane. Functionally, odorant receptor. In Homo sapiens (Human), this protein is Olfactory receptor 52L1 (OR52L1).